Consider the following 607-residue polypeptide: Elongation factor 4 (607 aa).

The tr-type G domain maps to 6–188; the sequence is SRIRNFSIIA…AIVARIPPPR (183 aa). Residues 18 to 23 and 135 to 138 each bind GTP; these read DHGKST and NKID.

This sequence belongs to the TRAFAC class translation factor GTPase superfamily. Classic translation factor GTPase family. LepA subfamily.

Its subcellular location is the cell inner membrane. It carries out the reaction GTP + H2O = GDP + phosphate + H(+). In terms of biological role, required for accurate and efficient protein synthesis under certain stress conditions. May act as a fidelity factor of the translation reaction, by catalyzing a one-codon backward translocation of tRNAs on improperly translocated ribosomes. Back-translocation proceeds from a post-translocation (POST) complex to a pre-translocation (PRE) complex, thus giving elongation factor G a second chance to translocate the tRNAs correctly. Binds to ribosomes in a GTP-dependent manner. The polypeptide is Elongation factor 4 (Sphingopyxis alaskensis (strain DSM 13593 / LMG 18877 / RB2256) (Sphingomonas alaskensis)).